Consider the following 434-residue polypeptide: Glutamyl-tRNA reductase (434 aa).

Residues 49–52 (TCNR), Ser109, 114–116 (EPQ), and Gln120 contribute to the substrate site. Residue Cys50 is the Nucleophile of the active site. 189–194 (GAGEMC) contributes to the NADP(+) binding site.

Belongs to the glutamyl-tRNA reductase family. In terms of assembly, homodimer.

The catalysed reaction is (S)-4-amino-5-oxopentanoate + tRNA(Glu) + NADP(+) = L-glutamyl-tRNA(Glu) + NADPH + H(+). Its pathway is porphyrin-containing compound metabolism; protoporphyrin-IX biosynthesis; 5-aminolevulinate from L-glutamyl-tRNA(Glu): step 1/2. Catalyzes the NADPH-dependent reduction of glutamyl-tRNA(Glu) to glutamate 1-semialdehyde (GSA). In Citrifermentans bemidjiense (strain ATCC BAA-1014 / DSM 16622 / JCM 12645 / Bem) (Geobacter bemidjiensis), this protein is Glutamyl-tRNA reductase.